A 1029-amino-acid polypeptide reads, in one-letter code: U2 snRNP-associated SURP motif-containing protein (1029 aa).

Disordered stretches follow at residues 1-111 and 141-274; these read MADK…EDEK and VNAA…PSTT. Residue A2 is modified to N-acetylalanine. Polar residues predominate over residues 7 to 16; that stretch reads GGSQKASSKT. Over residues 45-54 the composition is skewed to basic residues; that stretch reads TRPKSPRKHN. Residues 55-64 show a composition bias toward basic and acidic residues; sequence YRNESARESL. S67 carries the phosphoserine modification. A Glycyl lysine isopeptide (Lys-Gly) (interchain with G-Cter in SUMO2) cross-link involves residue K80. A coiled-coil region spans residues 92-121; sequence AKRTLSKKEQEELKKKEDEKAAAEIYEEFL. Basic and acidic residues-rich tracts occupy residues 97–111 and 144–155; these read SKKE…EDEK and AKEEHETDEKRG. Glycyl lysine isopeptide (Lys-Gly) (interchain with G-Cter in SUMO2) cross-links involve residues K145 and K168. Residues 169–178 are compositionally biased toward polar residues; sequence NPPNQSSNER. Residues 186-222 are compositionally biased toward basic and acidic residues; the sequence is ETKKPPLKKGEKEKKKSNLELFKEELKQIQEERDERH. Residues 192 to 232 are a coiled coil; sequence LKKGEKEKKKSNLELFKEELKQIQEERDERHKTKGRLSRFE. Phosphoserine is present on S202. K208 is covalently cross-linked (Glycyl lysine isopeptide (Lys-Gly) (interchain with G-Cter in SUMO2)). The residue at position 236 (S236) is a Phosphoserine. Residues 239–249 are compositionally biased toward basic and acidic residues; that stretch reads DGQRRSMDAPS. Residues 274-355 enclose the RRM domain; it reads TNLYLGNINP…FEMKLGWGKA (82 aa). Residues 430–473 form an SURP motif repeat; that stretch reads LIHRMIEFVVREGPMFEAMIMNREINNPMFRFLFENQTPAHVYY. The residue at position 485 (S485) is a Phosphoserine. Residues 534–679 form the CID domain; it reads LKEEQRDKLE…KLQNIFLGLV (146 aa). Phosphothreonine is present on T719. Residues K748 and K749 each participate in a glycyl lysine isopeptide (Lys-Gly) (interchain with G-Cter in SUMO2) cross-link. Residue K760 is modified to N6-acetyllysine; alternate. Residue K760 forms a Glycyl lysine isopeptide (Lys-Gly) (interchain with G-Cter in SUMO2); alternate linkage. Disordered stretches follow at residues 778 to 841 and 855 to 1029; these read KWEL…EEKR and QDEL…KNKH. Positions 786–806 are enriched in acidic residues; the sequence is EESEEEENQNQEEESEDEEDT. Phosphoserine occurs at positions 788, 800, and 811. Composition is skewed to basic and acidic residues over residues 810–841 and 874–922; these read KSEE…EEKR and QVEH…TPTR. Residues K822, K829, and K832 each participate in a glycyl lysine isopeptide (Lys-Gly) (interchain with G-Cter in SUMO2) cross-link. Residues 837–915 are a coiled coil; it reads SEEKRAKLRE…ESRSKDKKEK (79 aa). T931 bears the Phosphothreonine mark. Residues S946 and S948 each carry the phosphoserine modification. The segment covering 950-980 has biased composition (basic and acidic residues); it reads KSERSERSERSHKESSRSRSSHKDSPRDVSK. Basic residues predominate over residues 991–1029; sequence TPKRSRRSRSRSPKKSGKKSRSQSRSPHRSHKKSKKNKH.

This sequence belongs to the splicing factor SR family. As to quaternary structure, interacts with ERBB4.

The protein resides in the nucleus. This chain is U2 snRNP-associated SURP motif-containing protein (U2SURP), found in Homo sapiens (Human).